The chain runs to 335 residues: Fructose-1,6-bisphosphatase class 1 (335 aa).

Positions 92, 114, 116, and 117 each coordinate Mg(2+). Residues 117-120 and asparagine 209 each bind substrate; that span reads DGSS. Glutamate 281 contacts Mg(2+).

This sequence belongs to the FBPase class 1 family. Homotetramer. The cofactor is Mg(2+).

It localises to the cytoplasm. It carries out the reaction beta-D-fructose 1,6-bisphosphate + H2O = beta-D-fructose 6-phosphate + phosphate. Its pathway is carbohydrate biosynthesis; gluconeogenesis. The protein is Fructose-1,6-bisphosphatase class 1 of Nitrosococcus oceani (strain ATCC 19707 / BCRC 17464 / JCM 30415 / NCIMB 11848 / C-107).